A 144-amino-acid chain; its full sequence is Large ribosomal subunit protein uL15 (144 aa).

A disordered region spans residues 1–52 (MRLNSLSPAEGAKHSAKRLGRGIGSGLGKTGGRGHKGQKSRTGGGVRRGFEG). Over residues 21–31 (RGIGSGLGKTG) the composition is skewed to gly residues.

Belongs to the universal ribosomal protein uL15 family. Part of the 50S ribosomal subunit.

Its function is as follows. Binds to the 23S rRNA. The chain is Large ribosomal subunit protein uL15 from Haemophilus ducreyi (strain 35000HP / ATCC 700724).